Consider the following 184-residue polypeptide: uncharacterized protein (184 aa).

This is an uncharacterized protein from Dictyostelium discoideum (Social amoeba).